Consider the following 293-residue polypeptide: DNA repair protein RecO (293 aa).

The protein belongs to the RecO family.

In terms of biological role, involved in DNA repair and RecF pathway recombination. This Acaryochloris marina (strain MBIC 11017) protein is DNA repair protein RecO.